A 204-amino-acid chain; its full sequence is ATP phosphoribosyltransferase (204 aa).

This sequence belongs to the ATP phosphoribosyltransferase family. Short subfamily. In terms of assembly, heteromultimer composed of HisG and HisZ subunits.

It is found in the cytoplasm. It carries out the reaction 1-(5-phospho-beta-D-ribosyl)-ATP + diphosphate = 5-phospho-alpha-D-ribose 1-diphosphate + ATP. It participates in amino-acid biosynthesis; L-histidine biosynthesis; L-histidine from 5-phospho-alpha-D-ribose 1-diphosphate: step 1/9. Functionally, catalyzes the condensation of ATP and 5-phosphoribose 1-diphosphate to form N'-(5'-phosphoribosyl)-ATP (PR-ATP). Has a crucial role in the pathway because the rate of histidine biosynthesis seems to be controlled primarily by regulation of HisG enzymatic activity. The chain is ATP phosphoribosyltransferase from Staphylococcus aureus (strain USA300).